A 320-amino-acid polypeptide reads, in one-letter code: Malate dehydrogenase (320 aa).

NAD(+)-binding positions include 10-15 and Asp-34; that span reads GAGQIG. Arg-83 and Arg-89 together coordinate substrate. NAD(+) contacts are provided by residues Asn-96 and 119 to 121; that span reads ITN. Substrate is bound by residues Asn-121 and Arg-152. His-176 (proton acceptor) is an active-site residue.

Belongs to the LDH/MDH superfamily. MDH type 3 family.

The catalysed reaction is (S)-malate + NAD(+) = oxaloacetate + NADH + H(+). Functionally, catalyzes the reversible oxidation of malate to oxaloacetate. In Methylobacterium nodulans (strain LMG 21967 / CNCM I-2342 / ORS 2060), this protein is Malate dehydrogenase.